The primary structure comprises 233 residues: Large ribosomal subunit protein uL1 (233 aa).

This sequence belongs to the universal ribosomal protein uL1 family. In terms of assembly, part of the 50S ribosomal subunit.

Its function is as follows. Binds directly to 23S rRNA. The L1 stalk is quite mobile in the ribosome, and is involved in E site tRNA release. Protein L1 is also a translational repressor protein, it controls the translation of the L11 operon by binding to its mRNA. In Buchnera aphidicola subsp. Baizongia pistaciae (strain Bp), this protein is Large ribosomal subunit protein uL1.